Consider the following 526-residue polypeptide: Glucose-6-phosphate isomerase (526 aa).

Catalysis depends on glutamate 323, which acts as the Proton donor. Catalysis depends on residues histidine 352 and lysine 454.

This sequence belongs to the GPI family.

The protein localises to the cytoplasm. It catalyses the reaction alpha-D-glucose 6-phosphate = beta-D-fructose 6-phosphate. The protein operates within carbohydrate biosynthesis; gluconeogenesis. It functions in the pathway carbohydrate degradation; glycolysis; D-glyceraldehyde 3-phosphate and glycerone phosphate from D-glucose: step 2/4. Its function is as follows. Catalyzes the reversible isomerization of glucose-6-phosphate to fructose-6-phosphate. The protein is Glucose-6-phosphate isomerase of Prochlorococcus marinus subsp. pastoris (strain CCMP1986 / NIES-2087 / MED4).